Here is an 84-residue protein sequence, read N- to C-terminus: Large ribosomal subunit protein bL27 (84 aa).

This sequence belongs to the bacterial ribosomal protein bL27 family.

This Kocuria rhizophila (strain ATCC 9341 / DSM 348 / NBRC 103217 / DC2201) protein is Large ribosomal subunit protein bL27.